The primary structure comprises 185 residues: Ribosome-recycling factor (185 aa).

The protein belongs to the RRF family.

The protein localises to the cytoplasm. Responsible for the release of ribosomes from messenger RNA at the termination of protein biosynthesis. May increase the efficiency of translation by recycling ribosomes from one round of translation to another. This Frankia alni (strain DSM 45986 / CECT 9034 / ACN14a) protein is Ribosome-recycling factor.